The following is a 226-amino-acid chain: Large ribosomal subunit protein uL1 (226 aa).

The protein belongs to the universal ribosomal protein uL1 family. As to quaternary structure, part of the 50S ribosomal subunit.

Binds directly to 23S rRNA. The L1 stalk is quite mobile in the ribosome, and is involved in E site tRNA release. Its function is as follows. Protein L1 is also a translational repressor protein, it controls the translation of the L11 operon by binding to its mRNA. In Mycoplasma capricolum subsp. capricolum (strain California kid / ATCC 27343 / NCTC 10154), this protein is Large ribosomal subunit protein uL1.